Consider the following 233-residue polypeptide: Purine nucleoside phosphorylase DeoD-type (233 aa).

H4 contributes to the a purine D-ribonucleoside binding site. Residues G20, R24, R43, and 87–90 (RVGT) contribute to the phosphate site. A purine D-ribonucleoside contacts are provided by residues 178–180 (EME) and 202–203 (SD). The active-site Proton donor is the D203.

The protein belongs to the PNP/UDP phosphorylase family. Homohexamer; trimer of homodimers.

The catalysed reaction is a purine D-ribonucleoside + phosphate = a purine nucleobase + alpha-D-ribose 1-phosphate. The enzyme catalyses a purine 2'-deoxy-D-ribonucleoside + phosphate = a purine nucleobase + 2-deoxy-alpha-D-ribose 1-phosphate. Its function is as follows. Catalyzes the reversible phosphorolytic breakdown of the N-glycosidic bond in the beta-(deoxy)ribonucleoside molecules, with the formation of the corresponding free purine bases and pentose-1-phosphate. The sequence is that of Purine nucleoside phosphorylase DeoD-type from Listeria monocytogenes serotype 4b (strain CLIP80459).